A 116-amino-acid polypeptide reads, in one-letter code: Mercuric transport protein MerT (116 aa).

Helical transmembrane passes span 16-36 and 46-66; these read LAAI…ALGF and VLEP…FFAW. The Hg(2+) site is built by C24 and C25. 2 residues coordinate Hg(2+): C76 and C82. Residues 94 to 114 traverse the membrane as a helical segment; that stretch reads IFWFVAVLVLVALGFPYVMPF.

Belongs to the MerT family.

The protein localises to the cell inner membrane. Functionally, involved in mercury resistance. Probably transfers a mercuric ion from the periplasmic Hg(2+)-binding protein MerP to the cytoplasmic mercuric reductase MerA. The polypeptide is Mercuric transport protein MerT (Acinetobacter calcoaceticus).